We begin with the raw amino-acid sequence, 309 residues long: Minor serine/threonine-protein phosphatase PP2A-1 catalytic subunit (309 aa).

Residues Asp-57, His-59, Asp-85, and Asn-117 each contribute to the Mn(2+) site. His-118 (proton donor) is an active-site residue. Residues His-167 and His-241 each contribute to the Mn(2+) site. Leu-309 carries the leucine methyl ester modification.

The protein belongs to the PPP phosphatase family. PP-2A subfamily. It depends on Mn(2+) as a cofactor.

The catalysed reaction is O-phospho-L-seryl-[protein] + H2O = L-seryl-[protein] + phosphate. It catalyses the reaction O-phospho-L-threonyl-[protein] + H2O = L-threonyl-[protein] + phosphate. Essential role in cell cycle control. PP2A may be involved in controlling the entry into mitosis, possibly acting as an inhibitor. The polypeptide is Minor serine/threonine-protein phosphatase PP2A-1 catalytic subunit (ppa1) (Schizosaccharomyces pombe (strain 972 / ATCC 24843) (Fission yeast)).